The primary structure comprises 246 residues: Mediator of RNA polymerase II transcription subunit 6 (246 aa).

Positions V193–Q246 are disordered. Residues Q206 to T226 show a composition bias toward basic and acidic residues. A Glycyl lysine isopeptide (Lys-Gly) (interchain with G-Cter in SUMO2) cross-link involves residue K208. Residues K236 and K241 each carry the N6-acetyllysine modification.

The protein belongs to the Mediator complex subunit 6 family. Component of the Mediator complex, which is composed of MED1, MED4, MED6, MED7, MED8, MED9, MED10, MED11, MED12, MED13, MED13L, MED14, MED15, MED16, MED17, MED18, MED19, MED20, MED21, MED22, MED23, MED24, MED25, MED26, MED27, MED29, MED30, MED31, CCNC, CDK8 and CDC2L6/CDK11. The MED12, MED13, CCNC and CDK8 subunits form a distinct module termed the CDK8 module. Mediator containing the CDK8 module is less active than Mediator lacking this module in supporting transcriptional activation. Individual preparations of the Mediator complex lacking one or more distinct subunits have been variously termed ARC, CRSP, DRIP, PC2, SMCC and TRAP. Interacts with CTNNB1 and GLI3.

It is found in the nucleus. Functionally, component of the Mediator complex, a coactivator involved in the regulated transcription of nearly all RNA polymerase II-dependent genes. Mediator functions as a bridge to convey information from gene-specific regulatory proteins to the basal RNA polymerase II transcription machinery. Mediator is recruited to promoters by direct interactions with regulatory proteins and serves as a scaffold for the assembly of a functional preinitiation complex with RNA polymerase II and the general transcription factors. The chain is Mediator of RNA polymerase II transcription subunit 6 (MED6) from Homo sapiens (Human).